Reading from the N-terminus, the 95-residue chain is Large ribosomal subunit protein bL25 (95 aa).

This sequence belongs to the bacterial ribosomal protein bL25 family. In terms of assembly, part of the 50S ribosomal subunit; part of the 5S rRNA/L5/L18/L25 subcomplex. Contacts the 5S rRNA. Binds to the 5S rRNA independently of L5 and L18.

Functionally, this is one of the proteins that binds to the 5S RNA in the ribosome where it forms part of the central protuberance. The chain is Large ribosomal subunit protein bL25 from Shewanella amazonensis (strain ATCC BAA-1098 / SB2B).